The sequence spans 429 residues: Histidine--tRNA ligase (429 aa).

This sequence belongs to the class-II aminoacyl-tRNA synthetase family. In terms of assembly, homodimer.

The protein localises to the cytoplasm. The enzyme catalyses tRNA(His) + L-histidine + ATP = L-histidyl-tRNA(His) + AMP + diphosphate + H(+). This is Histidine--tRNA ligase from Pseudomonas aeruginosa (strain UCBPP-PA14).